The chain runs to 78 residues: Large ribosomal subunit protein bL28 (78 aa).

It belongs to the bacterial ribosomal protein bL28 family.

This is Large ribosomal subunit protein bL28 from Prochlorococcus marinus (strain MIT 9215).